Reading from the N-terminus, the 573-residue chain is MTNSKGRSITDKTSGGPSSGGGFVDWTLRLNTIQSDKFLNLLLSMVPVIYQKNQEDRHKKANGIWQDGLSTAVQTFSNRSEQHMEYHSFSEQSFHANNGHASSSCSQKYDDYANYNYCDGRETSETTAMLQDEDISSDGDEDAIVEVTPKLPKESSGIMALQILVPFLLAGFGTVSAGMVLDIVQHWEVFRKVTEVFILVPALLGLKGNLEMTLASRLSTAVNIGKMDSPIEKWNLIIGNLALKQVQATVVGFLAAVAAIILGWIPEGKYYLDHSILLCSSSVATAFIASLLQGIIMVGVIVGSKKTGINPDNVATPIAASFGDLITLAILAWISQGLYSCLETYYYISPLVGVFFLALTPIWIIIAAKHPATRTVLHSGWEPVITAMVISSIGGLILDTTVSDPNLVGIVVYTPVINGIGGNLVAIQASRISTYLHLHSIPGELPDEPKGCYYPFRTFFGPGVNNKSAQVLLLLVIPGHLIFLYTIHLMKSGHTSLTIIFIVVYLFGAVLQVFTLLWIADWMVHHFWRKGKDPDSFSIPYLTALGDLLGTALLALSFHFLWLIGDRDGDVGD.

Topologically, residues 1–162 are extracellular; sequence MTNSKGRSIT…KESSGIMALQ (162 aa). Ser-136 and Ser-137 each carry phosphoserine. A helical transmembrane segment spans residues 163–183; the sequence is ILVPFLLAGFGTVSAGMVLDI. The Cytoplasmic portion of the chain corresponds to 184-195; sequence VQHWEVFRKVTE. A helical transmembrane segment spans residues 196-216; the sequence is VFILVPALLGLKGNLEMTLAS. At 217 to 245 the chain is on the extracellular side; that stretch reads RLSTAVNIGKMDSPIEKWNLIIGNLALKQ. A helical membrane pass occupies residues 246 to 266; sequence VQATVVGFLAAVAAIILGWIP. Residues 267 to 282 are Cytoplasmic-facing; the sequence is EGKYYLDHSILLCSSS. A helical transmembrane segment spans residues 283–303; sequence VATAFIASLLQGIIMVGVIVG. The Extracellular portion of the chain corresponds to 304–313; it reads SKKTGINPDN. A helical membrane pass occupies residues 314–334; it reads VATPIAASFGDLITLAILAWI. Residues 335–347 are Cytoplasmic-facing; the sequence is SQGLYSCLETYYY. The chain crosses the membrane as a helical span at residues 348 to 368; that stretch reads ISPLVGVFFLALTPIWIIIAA. Over 369-376 the chain is Extracellular; sequence KHPATRTV. A helical membrane pass occupies residues 377 to 397; that stretch reads LHSGWEPVITAMVISSIGGLI. The Cytoplasmic segment spans residues 398-406; it reads LDTTVSDPN. Residues 407-427 traverse the membrane as a helical segment; the sequence is LVGIVVYTPVINGIGGNLVAI. The Extracellular portion of the chain corresponds to 428–469; that stretch reads QASRISTYLHLHSIPGELPDEPKGCYYPFRTFFGPGVNNKSA. The helical transmembrane segment at 470–490 threads the bilayer; it reads QVLLLLVIPGHLIFLYTIHLM. The Cytoplasmic portion of the chain corresponds to 491–498; it reads KSGHTSLT. The helical transmembrane segment at 499–519 threads the bilayer; sequence IIFIVVYLFGAVLQVFTLLWI. Topologically, residues 520–543 are extracellular; it reads ADWMVHHFWRKGKDPDSFSIPYLT. Residues 544–564 form a helical membrane-spanning segment; sequence ALGDLLGTALLALSFHFLWLI. Residues 565-573 lie on the Cytoplasmic side of the membrane; it reads GDRDGDVGD.

This sequence belongs to the SLC41A transporter family.

Its subcellular location is the cell membrane. It carries out the reaction Mg(2+)(in) = Mg(2+)(out). The enzyme catalyses Mn(2+)(in) = Mn(2+)(out). It catalyses the reaction Co(2+)(in) = Co(2+)(out). The catalysed reaction is Ni(2+)(in) = Ni(2+)(out). It carries out the reaction Fe(2+)(in) = Fe(2+)(out). Acts as a plasma-membrane magnesium transporter. Can also mediate the transport of other divalent metal cations in an order of Ba(2+) &gt; Ni(2+) &gt; Co(2+) &gt; Fe(2+) &gt; Mn(2+). The polypeptide is Solute carrier family 41 member 2 (SLC41A2) (Homo sapiens (Human)).